Here is a 489-residue protein sequence, read N- to C-terminus: Glycogen synthase (489 aa).

Lysine 18 is an ADP-alpha-D-glucose binding site.

The protein belongs to the glycosyltransferase 1 family. Bacterial/plant glycogen synthase subfamily.

The catalysed reaction is [(1-&gt;4)-alpha-D-glucosyl](n) + ADP-alpha-D-glucose = [(1-&gt;4)-alpha-D-glucosyl](n+1) + ADP + H(+). The protein operates within glycan biosynthesis; glycogen biosynthesis. In terms of biological role, synthesizes alpha-1,4-glucan chains using ADP-glucose. The sequence is that of Glycogen synthase from Rhodopseudomonas palustris (strain BisA53).